We begin with the raw amino-acid sequence, 469 residues long: uncharacterized protein (469 aa).

Residues 1–19 (MRINFVLLITLILPWFVSG) form the signal peptide. A run of 7 helical transmembrane segments spans residues 199–219 (IKST…TWLL), 236–256 (AFWV…MVAI), 283–303 (AYTS…PALV), 305–325 (YYVY…FAPL), 338–358 (ILLK…PFFA), 386–406 (IALA…RPLL), and 413–433 (GFQL…AFLF).

The protein localises to the membrane. This is an uncharacterized protein from Schizosaccharomyces pombe (strain 972 / ATCC 24843) (Fission yeast).